The following is a 227-amino-acid chain: PKHD-type hydroxylase NE2125 (227 aa).

One can recognise a Fe2OG dioxygenase domain in the interval 78-179 (KIVPPFFNRY…RLACFMFIQS (102 aa)). Residues histidine 97, aspartate 99, and histidine 160 each contribute to the Fe cation site. Arginine 170 is a binding site for 2-oxoglutarate.

The cofactor is Fe(2+). L-ascorbate is required as a cofactor.

The chain is PKHD-type hydroxylase NE2125 from Nitrosomonas europaea (strain ATCC 19718 / CIP 103999 / KCTC 2705 / NBRC 14298).